Here is a 154-residue protein sequence, read N- to C-terminus: Endoribonuclease YbeY (154 aa).

3 residues coordinate Zn(2+): His116, His120, and His126.

The protein belongs to the endoribonuclease YbeY family. It depends on Zn(2+) as a cofactor.

Its subcellular location is the cytoplasm. Functionally, single strand-specific metallo-endoribonuclease involved in late-stage 70S ribosome quality control and in maturation of the 3' terminus of the 16S rRNA. The protein is Endoribonuclease YbeY of Chromohalobacter salexigens (strain ATCC BAA-138 / DSM 3043 / CIP 106854 / NCIMB 13768 / 1H11).